Here is a 441-residue protein sequence, read N- to C-terminus: Diuretic hormone receptor (441 aa).

N-linked (GlcNAc...) asparagine glycosylation is found at N99, N107, and N112. The helical transmembrane segment at 135 to 158 threads the bilayer; it reads FVFFVGFCLSLVAIAVAIWIFLYF. Topologically, residues 159 to 166 are cytoplasmic; that stretch reads KDLRCLRN. Residues 167-187 traverse the membrane as a helical segment; sequence TIHTNLMATYICNDATWIISA. At 188 to 194 the chain is on the extracellular side; it reads VVQEYVE. A helical membrane pass occupies residues 195 to 224; sequence NGGLCSVLAVLMHYFYLTNFFWMFVEGLYL. Over 225–238 the chain is Cytoplasmic; that stretch reads FLLVVATFTGEKVK. Residues 239 to 260 traverse the membrane as a helical segment; the sequence is LQIYIIIGWGIPGVIVVTWAII. Residues 261-291 are Extracellular-facing; sequence KHLGKTAPDNAGESHPMVLLIKHCPWMAEDY. Residues 292–315 traverse the membrane as a helical segment; sequence FDWIHQAPVITVLAVNLVFLFSIM. The Cytoplasmic portion of the chain corresponds to 316 to 338; sequence WVLITKLQSANTAETQQYRKATK. A helical membrane pass occupies residues 339-357; it reads ALLVLFPLLGITYILMMQG. Residues 358-371 are Extracellular-facing; sequence PMDGVAGHVFRNAQ. Residues 372 to 391 form a helical membrane-spanning segment; it reads ALLLSLQGFTVALFYCFLNT. Residues 392-441 are Cytoplasmic-facing; it reads EVQNTLRHRMSRWRETRTVGGGRRYTLSGHSKDWSPRSRTESIRCLQHRS.

Belongs to the G-protein coupled receptor 2 family. As to expression, expressed in Malpighian tubules.

It localises to the cell membrane. Receptor for the insect diurectic hormone. The activity of this receptor is mediated by G proteins which activate adenylyl cyclase. The chain is Diuretic hormone receptor from Acheta domesticus (House cricket).